The chain runs to 129 residues: Fluoride-specific ion channel FluC (129 aa).

4 consecutive transmembrane segments (helical) span residues 8-28, 36-56, 71-91, and 103-123; these read FFCVAVGGAIGASARFAMVLA, AFPFATLTVNIIGSFFLGLLL, FLGVGLLGAFTTFSTFSVEVV, and ALHIAFNVIICIAAVFAAMML. Na(+) is bound by residues glycine 78 and threonine 81.

The protein belongs to the fluoride channel Fluc/FEX (TC 1.A.43) family.

It localises to the cell inner membrane. The enzyme catalyses fluoride(in) = fluoride(out). With respect to regulation, na(+) is not transported, but it plays an essential structural role and its presence is essential for fluoride channel function. In terms of biological role, fluoride-specific ion channel. Important for reducing fluoride concentration in the cell, thus reducing its toxicity. This chain is Fluoride-specific ion channel FluC, found in Idiomarina loihiensis (strain ATCC BAA-735 / DSM 15497 / L2-TR).